Consider the following 150-residue polypeptide: 3-hydroxyacyl-[acyl-carrier-protein] dehydratase FabZ (150 aa).

The active site involves His-47.

This sequence belongs to the thioester dehydratase family. FabZ subfamily.

The protein localises to the cytoplasm. The catalysed reaction is a (3R)-hydroxyacyl-[ACP] = a (2E)-enoyl-[ACP] + H2O. Functionally, involved in unsaturated fatty acids biosynthesis. Catalyzes the dehydration of short chain beta-hydroxyacyl-ACPs and long chain saturated and unsaturated beta-hydroxyacyl-ACPs. This chain is 3-hydroxyacyl-[acyl-carrier-protein] dehydratase FabZ, found in Verminephrobacter eiseniae (strain EF01-2).